The following is a 122-amino-acid chain: Ribonuclease P protein component (122 aa).

Belongs to the RnpA family. In terms of assembly, consists of a catalytic RNA component (M1 or rnpB) and a protein subunit.

The catalysed reaction is Endonucleolytic cleavage of RNA, removing 5'-extranucleotides from tRNA precursor.. Functionally, RNaseP catalyzes the removal of the 5'-leader sequence from pre-tRNA to produce the mature 5'-terminus. It can also cleave other RNA substrates such as 4.5S RNA. The protein component plays an auxiliary but essential role in vivo by binding to the 5'-leader sequence and broadening the substrate specificity of the ribozyme. This chain is Ribonuclease P protein component, found in Lactobacillus helveticus (strain DPC 4571).